The primary structure comprises 65 residues: Large ribosomal subunit protein bL35 (65 aa).

Residues 1-15 (MPKLKTRKAAAKRFR) show a composition bias toward basic residues. Residues 1-28 (MPKLKTRKAAAKRFRQTGTGKFTRRKAN) form a disordered region.

It belongs to the bacterial ribosomal protein bL35 family.

This Cyanothece sp. (strain PCC 7425 / ATCC 29141) protein is Large ribosomal subunit protein bL35.